The chain runs to 532 residues: CTP synthase (532 aa).

An amidoligase domain region spans residues 1 to 267 (MAKFIFVTGG…QDIIIEQLQL (267 aa)). Residue serine 13 coordinates CTP. Serine 13 provides a ligand contact to UTP. 14–19 (GLGKGI) is a binding site for ATP. Residue tyrosine 54 participates in L-glutamine binding. An ATP-binding site is contributed by aspartate 71. Mg(2+) is bound by residues aspartate 71 and glutamate 141. CTP contacts are provided by residues 148–150 (DIE), 188–193 (KTKPIQ), and lysine 224. UTP contacts are provided by residues 188–193 (KTKPIQ) and lysine 224. The Glutamine amidotransferase type-1 domain occupies 292–532 (EISFVGKYIE…FIKAIIENNK (241 aa)). Residue glycine 354 coordinates L-glutamine. The active-site Nucleophile; for glutamine hydrolysis is cysteine 381. Residues 382–385 (LGMQ), glutamate 405, and arginine 461 each bind L-glutamine. Residues histidine 506 and glutamate 508 contribute to the active site.

This sequence belongs to the CTP synthase family. As to quaternary structure, homotetramer.

It catalyses the reaction UTP + L-glutamine + ATP + H2O = CTP + L-glutamate + ADP + phosphate + 2 H(+). The catalysed reaction is L-glutamine + H2O = L-glutamate + NH4(+). It carries out the reaction UTP + NH4(+) + ATP = CTP + ADP + phosphate + 2 H(+). It functions in the pathway pyrimidine metabolism; CTP biosynthesis via de novo pathway; CTP from UDP: step 2/2. With respect to regulation, allosterically activated by GTP, when glutamine is the substrate; GTP has no effect on the reaction when ammonia is the substrate. The allosteric effector GTP functions by stabilizing the protein conformation that binds the tetrahedral intermediate(s) formed during glutamine hydrolysis. Inhibited by the product CTP, via allosteric rather than competitive inhibition. In terms of biological role, catalyzes the ATP-dependent amination of UTP to CTP with either L-glutamine or ammonia as the source of nitrogen. Regulates intracellular CTP levels through interactions with the four ribonucleotide triphosphates. The protein is CTP synthase of Mycoplasma capricolum subsp. capricolum (strain California kid / ATCC 27343 / NCTC 10154).